A 289-amino-acid chain; its full sequence is MASSTFFSDWNQLIKPRVTSLVLATIIPGLYLASEQPPSVFLITVTLFGTFLMSSASFIFNQVIERDRDAKMKRTSNRPIPSERISIPQATLVGISMMGLSFYMLTVYVNLLTALCALTALISYVFLYTIFLKPRTTQNIVIGGVAGCVGPLIGYAAIGNSLPIQAWILFTMIFLWTPAHFWALAIFLKEDYSDANFPMLPVVKGINQTTKSIFFYTILYSLSCVSFYFLEPSMGLLYLVIVLLVCIWMGILSYRLIQNPERQAARKFFLFSIFHLFLINITIVVDHMI.

9 helical membrane passes run 13-33 (LIKP…LYLA), 40-60 (VFLI…SFIF), 85-105 (ISIP…FYML), 111-131 (LLTA…YTIF), 139-159 (NIVI…AAIG), 168-188 (ILFT…AIFL), 212-232 (SIFF…FLEP), 234-254 (MGLL…ILSY), and 269-289 (FLFS…DHMI).

This sequence belongs to the UbiA prenyltransferase family. Protoheme IX farnesyltransferase subfamily.

The protein resides in the cell inner membrane. It catalyses the reaction heme b + (2E,6E)-farnesyl diphosphate + H2O = Fe(II)-heme o + diphosphate. The protein operates within porphyrin-containing compound metabolism; heme O biosynthesis; heme O from protoheme: step 1/1. In terms of biological role, converts heme B (protoheme IX) to heme O by substitution of the vinyl group on carbon 2 of heme B porphyrin ring with a hydroxyethyl farnesyl side group. The chain is Protoheme IX farnesyltransferase from Leptospira borgpetersenii serovar Hardjo-bovis (strain JB197).